Consider the following 382-residue polypeptide: Alanine racemase (382 aa).

The active-site Proton acceptor; specific for D-alanine is the Lys39. Lys39 carries the post-translational modification N6-(pyridoxal phosphate)lysine. Arg138 contributes to the substrate binding site. Tyr265 serves as the catalytic Proton acceptor; specific for L-alanine. A substrate-binding site is contributed by Met312.

It belongs to the alanine racemase family. It depends on pyridoxal 5'-phosphate as a cofactor.

It carries out the reaction L-alanine = D-alanine. Its pathway is amino-acid biosynthesis; D-alanine biosynthesis; D-alanine from L-alanine: step 1/1. Catalyzes the interconversion of L-alanine and D-alanine. May also act on other amino acids. In Staphylococcus saprophyticus subsp. saprophyticus (strain ATCC 15305 / DSM 20229 / NCIMB 8711 / NCTC 7292 / S-41), this protein is Alanine racemase (alr).